We begin with the raw amino-acid sequence, 427 residues long: Glutamate-1-semialdehyde 2,1-aminomutase 1 (427 aa).

Lys267 carries the N6-(pyridoxal phosphate)lysine modification.

The protein belongs to the class-III pyridoxal-phosphate-dependent aminotransferase family. HemL subfamily. As to quaternary structure, homodimer. Requires pyridoxal 5'-phosphate as cofactor.

The protein localises to the cytoplasm. The enzyme catalyses (S)-4-amino-5-oxopentanoate = 5-aminolevulinate. It participates in porphyrin-containing compound metabolism; protoporphyrin-IX biosynthesis; 5-aminolevulinate from L-glutamyl-tRNA(Glu): step 2/2. The protein is Glutamate-1-semialdehyde 2,1-aminomutase 1 of Macrococcus caseolyticus (strain JCSC5402) (Macrococcoides caseolyticum).